The chain runs to 156 residues: Small ribosomal subunit protein uS7 (156 aa).

Belongs to the universal ribosomal protein uS7 family. As to quaternary structure, part of the 30S ribosomal subunit. Contacts proteins S9 and S11.

One of the primary rRNA binding proteins, it binds directly to 16S rRNA where it nucleates assembly of the head domain of the 30S subunit. Is located at the subunit interface close to the decoding center, probably blocks exit of the E-site tRNA. The sequence is that of Small ribosomal subunit protein uS7 from Pseudomonas fluorescens (strain ATCC BAA-477 / NRRL B-23932 / Pf-5).